A 473-amino-acid polypeptide reads, in one-letter code: ATP synthase subunit beta (473 aa).

158–165 (GGAGVGKT) serves as a coordination point for ATP.

The protein belongs to the ATPase alpha/beta chains family. F-type ATPases have 2 components, CF(1) - the catalytic core - and CF(0) - the membrane proton channel. CF(1) has five subunits: alpha(3), beta(3), gamma(1), delta(1), epsilon(1). CF(0) has three main subunits: a(1), b(2) and c(9-12). The alpha and beta chains form an alternating ring which encloses part of the gamma chain. CF(1) is attached to CF(0) by a central stalk formed by the gamma and epsilon chains, while a peripheral stalk is formed by the delta and b chains.

It localises to the cell membrane. The enzyme catalyses ATP + H2O + 4 H(+)(in) = ADP + phosphate + 5 H(+)(out). Functionally, produces ATP from ADP in the presence of a proton gradient across the membrane. The catalytic sites are hosted primarily by the beta subunits. This is ATP synthase subunit beta from Geobacillus kaustophilus (strain HTA426).